A 1144-amino-acid chain; its full sequence is Nitric oxide synthase, inducible (1144 aa).

The DINNN-motif; mediates interaction with SPSB1, SPSB2 and SPSB4 motif lies at 23–27 (DINNN). The segment at 37-59 (SPTIQDDPKSHQNGSPQLLTGTA) is disordered. Over residues 47-59 (HQNGSPQLLTGTA) the composition is skewed to polar residues. Positions 104 and 109 each coordinate Zn(2+). (6R)-L-erythro-5,6,7,8-tetrahydrobiopterin is bound at residue Ser112. Residue Cys194 coordinates heme b. Residues Gln257, Trp366, Tyr367, and Glu371 each coordinate L-arginine. (6R)-L-erythro-5,6,7,8-tetrahydrobiopterin contacts are provided by Arg375, Ile456, Trp457, and Phe470. Heme b is bound at residue Tyr485. The tract at residues 509–529 (FRVLVKVVFFASMLMRKVMAS) is calmodulin-binding. The Flavodoxin-like domain occupies 533 to 671 (ATVLFATETG…AFRSWAVQTF (139 aa)). Positions 539, 540, 541, 543, and 544 each coordinate FMN. Phosphotyrosine is present on Tyr569. Ser585, Thr586, Ser622, Cys629, Glu655, and Gln659 together coordinate FMN. One can recognise an FAD-binding FR-type domain in the interval 724–964 (KNVFTMRLKS…VRSVSGFQLP (241 aa)). NADP(+) is bound at residue Arg744. Residues His766, Arg900, Tyr902, Ser903, Thr918, and Ala920 each coordinate FAD. Thr923 serves as a coordination point for NADP(+). FAD contacts are provided by Tyr924, Val937, Cys938, and Ser939. 8 residues coordinate NADP(+): Thr978, Arg1011, Ser1040, Arg1041, Lys1047, Tyr1049, Gln1051, and Asp1084.

It belongs to the NOS family. As to quaternary structure, homodimer. Interacts with NHERF1. Interacts with GAPDH. Interacts with S100A8 and S100A9 to form the iNOS-S100A8/9 transnitrosylase complex. Interacts with SPSB1, SPSB2 and SPSB4. Interacts with ELOC and CUL5 in the presence of SPSB1 or SPSB2 or SPSB4. Forms a complex with ASL, ASS1 and HSP90AA1; the complex regulates cell-autonomous L-arginine synthesis and citrulline recycling while channeling extracellular L-arginine to nitric oxide synthesis pathway. Requires heme b as cofactor. FAD is required as a cofactor. It depends on FMN as a cofactor. (6R)-L-erythro-5,6,7,8-tetrahydrobiopterin serves as cofactor. In terms of processing, polyubiquitinated; mediated by SPSB1, SPSB2 and SPSB4, leading to proteasomal degradation. As to expression, macrophages.

The protein localises to the cytoplasm. It is found in the cytosol. It catalyses the reaction 2 L-arginine + 3 NADPH + 4 O2 + H(+) = 2 L-citrulline + 2 nitric oxide + 3 NADP(+) + 4 H2O. Not stimulated by calcium/calmodulin. Aspirin inhibits expression and function of this enzyme and effects may be exerted at the level of translational/post-translational modification and directly on the catalytic activity. Its function is as follows. Produces nitric oxide (NO) which is a messenger molecule with diverse functions throughout the body. In macrophages, NO mediates tumoricidal and bactericidal actions. Also has nitrosylase activity and mediates cysteine S-nitrosylation of cytoplasmic target proteins such PTGS2/COX2. As component of the iNOS-S100A8/9 transnitrosylase complex involved in the selective inflammatory stimulus-dependent S-nitrosylation of GAPDH implicated in regulation of the GAIT complex activity and probably multiple targets including ANXA5, EZR, MSN and VIM. Involved in inflammation, enhances the synthesis of pro-inflammatory mediators such as IL6 and IL8. The protein is Nitric oxide synthase, inducible (Nos2) of Mus musculus (Mouse).